The chain runs to 663 residues: Rho GTPase-activating protein 18 (663 aa).

2 disordered regions span residues 14-73 (AYHP…DESM) and 85-106 (RSNE…DEGE). Basic and acidic residues predominate over residues 27-37 (SHVKGGDEATS). Polar residues predominate over residues 38–51 (SRRYGQYTINQEGS). A phosphoserine mark is found at S65 and S68. Over residues 85 to 102 (RSNENRQEGQEAIVVKEP) the composition is skewed to basic and acidic residues. T156 is modified (phosphothreonine). Disordered regions lie at residues 173-228 (FAQQ…PASE) and 245-277 (KEFS…TRIG). Composition is skewed to basic and acidic residues over residues 178–205 (EAQE…KDDQ) and 212–222 (DSKEQISRVPE). Residues S260 and S263 each carry the phosphoserine modification. The 200-residue stretch at 324–523 (IPLTILLEQD…LLIRYQKILW (200 aa)) folds into the Rho-GAP domain. Residue S610 is modified to Phosphoserine.

In terms of assembly, interacts with MPHOSPH6. As to expression, widely expressed: expressed in most organs, except small intestine.

It localises to the cytoplasm. In terms of biological role, rho GTPase activating protein that suppresses F-actin polymerization by inhibiting Rho. Rho GTPase activating proteins act by converting Rho-type GTPases to an inactive GDP-bound state. Plays a key role in tissue tension and 3D tissue shape by regulating cortical actomyosin network formation. Acts downstream of YAP1 and inhibits actin polymerization, which in turn reduces nuclear localization of YAP1. Regulates cell shape, spreading, and migration. The protein is Rho GTPase-activating protein 18 of Mus musculus (Mouse).